A 96-amino-acid polypeptide reads, in one-letter code: UPF0235 protein VV1_1522 (96 aa).

Belongs to the UPF0235 family.

This chain is UPF0235 protein VV1_1522, found in Vibrio vulnificus (strain CMCP6).